A 367-amino-acid polypeptide reads, in one-letter code: Pantothenate kinase CAB1 (367 aa).

It belongs to the type II pantothenate kinase family.

The protein resides in the cytoplasm. The protein localises to the nucleus. The enzyme catalyses (R)-pantothenate + ATP = (R)-4'-phosphopantothenate + ADP + H(+). It participates in cofactor biosynthesis; coenzyme A biosynthesis; CoA from (R)-pantothenate: step 1/5. Its activity is regulated as follows. Regulated by feedback inhibition by malonyl-CoA. Its function is as follows. Plays a role in the physiological regulation of the intracellular CoA concentration. The chain is Pantothenate kinase CAB1 (CAB1) from Saccharomyces cerevisiae (strain ATCC 204508 / S288c) (Baker's yeast).